Reading from the N-terminus, the 65-residue chain is Large ribosomal subunit protein bL35 (65 aa).

Positions 1–52 (MPKMKSNRAAAKRFKRTANGGFKSGNSFTSHRFHGKTKKQRRQLRGLSMMDK) are disordered. The segment covering 31-44 (HRFHGKTKKQRRQL) has biased composition (basic residues).

It belongs to the bacterial ribosomal protein bL35 family.

This Limosilactobacillus reuteri (strain DSM 20016) (Lactobacillus reuteri) protein is Large ribosomal subunit protein bL35.